A 96-amino-acid chain; its full sequence is Pterin-4-alpha-carbinolamine dehydratase (96 aa).

Belongs to the pterin-4-alpha-carbinolamine dehydratase family.

The protein resides in the spore wall. The catalysed reaction is (4aS,6R)-4a-hydroxy-L-erythro-5,6,7,8-tetrahydrobiopterin = (6R)-L-erythro-6,7-dihydrobiopterin + H2O. Functionally, has a role in spore wall formation. The sequence is that of Pterin-4-alpha-carbinolamine dehydratase (omt2) from Schizosaccharomyces pombe (strain 972 / ATCC 24843) (Fission yeast).